We begin with the raw amino-acid sequence, 1462 residues long: uncharacterized protein (1462 aa).

The chain crosses the membrane as a helical span at residues 119–139 (TGYITSLCLSAILKFFSFRII). Phosphoserine occurs at positions 411 and 420. The 190-residue stretch at 541-730 (TLIESKKRKA…SEIYKAIKEN (190 aa)) folds into the SEC7 domain. One copy of the HEAT repeat lies at 1102–1139 (ENSEDWGLFSKLCNLLNDKNIVVRNQSLSLFHQLVNKY).

It localises to the cytoplasm. It is found in the golgi apparatus membrane. This is an uncharacterized protein from Schizosaccharomyces pombe (strain 972 / ATCC 24843) (Fission yeast).